We begin with the raw amino-acid sequence, 147 residues long: Cyanate hydratase (147 aa).

Catalysis depends on residues arginine 88, glutamate 91, and serine 114.

It belongs to the cyanase family.

The enzyme catalyses cyanate + hydrogencarbonate + 3 H(+) = NH4(+) + 2 CO2. Catalyzes the reaction of cyanate with bicarbonate to produce ammonia and carbon dioxide. The polypeptide is Cyanate hydratase (Prochlorococcus marinus (strain NATL2A)).